A 251-amino-acid chain; its full sequence is Flap endonuclease Xni (251 aa).

Residue Asp104 coordinates Mg(2+). The 5'-3' exonuclease domain maps to 160–249 (VSPGQLADFW…LDGNLQQLRL (90 aa)). K(+) contacts are provided by Leu171, Ala172, Pro180, Val182, and Ile185. An interaction with DNA region spans residues 184–189 (GIGPKS).

The protein belongs to the Xni family. It depends on Mg(2+) as a cofactor. The cofactor is K(+).

Its function is as follows. Has flap endonuclease activity. During DNA replication, flap endonucleases cleave the 5'-overhanging flap structure that is generated by displacement synthesis when DNA polymerase encounters the 5'-end of a downstream Okazaki fragment. In Cronobacter sakazakii (strain ATCC BAA-894) (Enterobacter sakazakii), this protein is Flap endonuclease Xni.